Here is a 396-residue protein sequence, read N- to C-terminus: Ornithine aminotransferase (396 aa).

Position 255 is an N6-(pyridoxal phosphate)lysine (K255).

Belongs to the class-III pyridoxal-phosphate-dependent aminotransferase family. OAT subfamily. It depends on pyridoxal 5'-phosphate as a cofactor.

It is found in the cytoplasm. The catalysed reaction is a 2-oxocarboxylate + L-ornithine = L-glutamate 5-semialdehyde + an L-alpha-amino acid. It participates in amino-acid biosynthesis; L-proline biosynthesis; L-glutamate 5-semialdehyde from L-ornithine: step 1/1. Its function is as follows. Catalyzes the interconversion of ornithine to glutamate semialdehyde. The sequence is that of Ornithine aminotransferase from Bacillus anthracis (strain A0248).